Reading from the N-terminus, the 413-residue chain is Hemolin (413 aa).

The signal sequence occupies residues 1–19 (MAFKSIAVLSACIIVGSAL). 4 consecutive Ig-like C2-type domains span residues 25–112 (PVLK…RVIS), 122–211 (PAKT…EEVV), 233–322 (PQYV…LKLT), and 327–413 (PKYE…VQVN). 4 cysteine pairs are disulfide-bonded: C46–C97, C140–C199, C252–C305, and C349–C395. N-linked (GlcNAc...) asparagine glycosylation is present at N283.

Belongs to the hemolin family. Hemolymph.

It localises to the secreted. Its subcellular location is the extracellular space. Its function is as follows. Insect-immune protein. Forms a protein complex at the bacterial surface. Can inhibit hemocyte aggregation. The protein is Hemolin of Hyalophora cecropia (Cecropia moth).